The following is a 436-amino-acid chain: Xylose isomerase (436 aa).

Mg(2+) contacts are provided by aspartate 306 and aspartate 308.

The protein belongs to the xylose isomerase family. Homotetramer. Mg(2+) serves as cofactor.

The protein resides in the cytoplasm. The catalysed reaction is alpha-D-xylose = alpha-D-xylulofuranose. This Sinorhizobium fredii (strain NBRC 101917 / NGR234) protein is Xylose isomerase.